Here is a 430-residue protein sequence, read N- to C-terminus: Serine/threonine transporter SstT (430 aa).

The next 9 membrane-spanning stretches (helical) occupy residues 24–44, 47–67, 82–102, 144–164, 186–206, 223–243, 294–314, 320–340, and 361–381; these read IIVG…VTWI, FGTL…FVLV, FGTV…VAVL, AIID…GLAM, VIRW…FTNV, LLVG…IFIF, IPLG…IMAM, LGIQ…ALGA, and FGIS…IGVI.

It belongs to the dicarboxylate/amino acid:cation symporter (DAACS) (TC 2.A.23) family.

The protein resides in the cell membrane. The catalysed reaction is L-serine(in) + Na(+)(in) = L-serine(out) + Na(+)(out). It catalyses the reaction L-threonine(in) + Na(+)(in) = L-threonine(out) + Na(+)(out). In terms of biological role, involved in the import of serine and threonine into the cell, with the concomitant import of sodium (symport system). The sequence is that of Serine/threonine transporter SstT from Bifidobacterium adolescentis (strain ATCC 15703 / DSM 20083 / NCTC 11814 / E194a).